We begin with the raw amino-acid sequence, 251 residues long: tRNA (guanine-N(7)-)-methyltransferase (251 aa).

The disordered stretch occupies residues 1–43 (MQPNEQPGTGPADTTLEQQDTAAAEVGHPRRIRSFVRRAGRTS). Residues 29–40 (PRRIRSFVRRAG) are compositionally biased toward basic residues. S-adenosyl-L-methionine contacts are provided by glutamate 82, glutamate 107, aspartate 134, and aspartate 157. Residue aspartate 157 is part of the active site. Lysine 161 lines the substrate pocket. The interval 163 to 168 (RHNKRR) is interaction with RNA. Substrate-binding positions include aspartate 193 and 228–231 (TKFE).

This sequence belongs to the class I-like SAM-binding methyltransferase superfamily. TrmB family.

It carries out the reaction guanosine(46) in tRNA + S-adenosyl-L-methionine = N(7)-methylguanosine(46) in tRNA + S-adenosyl-L-homocysteine. The protein operates within tRNA modification; N(7)-methylguanine-tRNA biosynthesis. In terms of biological role, catalyzes the formation of N(7)-methylguanine at position 46 (m7G46) in tRNA. The protein is tRNA (guanine-N(7)-)-methyltransferase of Ralstonia nicotianae (strain ATCC BAA-1114 / GMI1000) (Ralstonia solanacearum).